The sequence spans 290 residues: MFLLELIKGIILGIVEGLTEFAPVSSTGHMILVDDMWLKSTNFLGSQSAFTFKVVIQLGSVFAAAWVFRERFLEILHIGQHKPEPSTSGDRRSKPRRLNLIHVLVGMVPAGILGFLFDDLIEKYLFSVPTVLIGLFIGAIYMIIADKYSKTVQHPQTVDQINYFQAFVIGISQAIAMWPGFSRSGSTISTGVLMKLNHKAASDFTFIMSVPIMLAASGLSLLKHYEYIHLAHIPFYILGFLAAFIVGLIAIKTFLHLINKVKLVPFAIYRIVLVIFIAILYFGFGIGKGI.

Transmembrane regions (helical) follow at residues Met1–Phe21, Ser48–Phe68, Ile101–Ile121, Leu125–Ala145, Ile161–Phe181, Ser202–Leu222, Ala231–Ile251, and Phe266–Ile286.

The protein belongs to the UppP family.

The protein resides in the cell membrane. It carries out the reaction di-trans,octa-cis-undecaprenyl diphosphate + H2O = di-trans,octa-cis-undecaprenyl phosphate + phosphate + H(+). Catalyzes the dephosphorylation of undecaprenyl diphosphate (UPP). Confers resistance to bacitracin. The polypeptide is Undecaprenyl-diphosphatase (Staphylococcus epidermidis (strain ATCC 35984 / DSM 28319 / BCRC 17069 / CCUG 31568 / BM 3577 / RP62A)).